A 390-amino-acid polypeptide reads, in one-letter code: Aspergillopepsin-1 (390 aa).

The signal sequence occupies residues 1-19 (MVNTSLLAALTAYAVAVSA). The propeptide at 20–67 (APTAPQVKGFSVNQVAVPKGVYRHPAAQLAKAYGKYHATVPTQVAAAA) is activation peptide. O-linked (Man...) threonine glycosylation occurs at Thr70. One can recognise a Peptidase A1 domain in the interval 84–387 (YITQVTVGDD…DASGPRLGFA (304 aa)). Active-site residues include Asp100 and Asp281.

The protein belongs to the peptidase A1 family.

It localises to the secreted. It carries out the reaction Hydrolysis of proteins with broad specificity. Generally favors hydrophobic residues in P1 and P1', but also accepts Lys in P1, which leads to activation of trypsinogen. Does not clot milk.. Inhibited by the microbial peptide pepstatin. In terms of biological role, secreted aspartic endopeptidase that allows assimilation of proteinaceous substrates. The scissile peptide bond is attacked by a nucleophilic water molecule activated by two aspartic residues in the active site. Shows a broad primary substrate specificity. Favors hydrophobic residues at the P1 and P1' positions, but also accepts a lysine residue in the P1 position, leading to the activation of trypsinogen and chymotrypsinogen A. This is Aspergillopepsin-1 (pepA) from Aspergillus oryzae (Yellow koji mold).